A 485-amino-acid chain; its full sequence is MTVSATADGPAGTKTATGRVVRVIGPVVDAEFPRDAMPDLFNALHVDVTLAGGEKTLTLEVAQHLGDNLVRAISMQPTDGLVRGVEVRDTGSPITVPVGDTVKGHVFNAIGECLNLEPGETLSPDDHWQIHRKAPAFADLEPKTEMLETGIKVIDLLAPYVKGGKIGLFGGAGVGKTVLIQEMITRVARNFGGTSVFAGVGERTREGNDLIAEMTESGVIDKTALVYGQMDEPPGTRLRVALSALTMAEYFRDVQKQEVLLFIDNIFRFTQAGSEVSTLLGRMPSAVGYQPTLADEMGELQERITSVRGQAITSLQAIYVPADDYTDPAPATTFAHLDATTNLERSISDKGIYPAVDPLASSSRILAPEFVGQEHFVVASEVKRILQRYKDLQDIIAILGIEELSEEDKLIVGRARRIERFLSQNTYAAEQFTGMKGSTVPIKETIEAFKKISEGEYDHFPEQAFFMCGGLDDLERKAKELMAEG.

G170–T177 serves as a coordination point for ATP.

This sequence belongs to the ATPase alpha/beta chains family. In terms of assembly, F-type ATPases have 2 components, CF(1) - the catalytic core - and CF(0) - the membrane proton channel. CF(1) has five subunits: alpha(3), beta(3), gamma(1), delta(1), epsilon(1). CF(0) has three main subunits: a(1), b(2) and c(9-12). The alpha and beta chains form an alternating ring which encloses part of the gamma chain. CF(1) is attached to CF(0) by a central stalk formed by the gamma and epsilon chains, while a peripheral stalk is formed by the delta and b chains.

It localises to the cell membrane. The catalysed reaction is ATP + H2O + 4 H(+)(in) = ADP + phosphate + 5 H(+)(out). In terms of biological role, produces ATP from ADP in the presence of a proton gradient across the membrane. The catalytic sites are hosted primarily by the beta subunits. This Salinispora arenicola (strain CNS-205) protein is ATP synthase subunit beta.